The sequence spans 347 residues: Phosphate acyltransferase (347 aa).

Belongs to the PlsX family. In terms of assembly, homodimer. Probably interacts with PlsY.

It localises to the cytoplasm. It carries out the reaction a fatty acyl-[ACP] + phosphate = an acyl phosphate + holo-[ACP]. It participates in lipid metabolism; phospholipid metabolism. Its function is as follows. Catalyzes the reversible formation of acyl-phosphate (acyl-PO(4)) from acyl-[acyl-carrier-protein] (acyl-ACP). This enzyme utilizes acyl-ACP as fatty acyl donor, but not acyl-CoA. The polypeptide is Phosphate acyltransferase (Lawsonia intracellularis (strain PHE/MN1-00)).